The primary structure comprises 355 residues: MKFGNFLLTYQPPELSQTEVMKRLVNLGKASEGCGFDTVWLLEHHFTEFGLLGNPYVAAAHLLGATETLNVGTAAIVLPTAHPVRQAEDVNLLDQMSKGRFRFGICRGLYDKDFRVFGTDMDNSRALMDCWYDLMKEGFNEGYIAADNEHIKFPKIQLNPSAYTQGGAPVYVVAESASTTEWAAERGLPMILSWIINTHEKKAQLDLYNEVATEHGYDVTKIDHCLSYITSVDHDSNRAKDICRNFLGHWYDSYVNATKIFDDSDQTKGYDFNKGQWRDFVLKGHKDTNRRIDYSYEINPVGTPEECIAIIQQDIDATGIDNICCGFEANGSEEEIIASMKLFQSDVMPYLKEKQ.

It belongs to the bacterial luciferase oxidoreductase family. As to quaternary structure, heterodimer of an alpha and a beta chain.

The catalysed reaction is a long-chain fatty aldehyde + FMNH2 + O2 = a long-chain fatty acid + hnu + FMN + H2O + 2 H(+). Functionally, light-emitting reaction in luminous bacteria. This is Alkanal monooxygenase alpha chain (luxA) from Vibrio harveyi (Beneckea harveyi).